The following is a 117-amino-acid chain: Large ribosomal subunit protein bL20 (117 aa).

This sequence belongs to the bacterial ribosomal protein bL20 family.

Functionally, binds directly to 23S ribosomal RNA and is necessary for the in vitro assembly process of the 50S ribosomal subunit. It is not involved in the protein synthesizing functions of that subunit. The chain is Large ribosomal subunit protein bL20 from Campylobacter jejuni subsp. jejuni serotype O:2 (strain ATCC 700819 / NCTC 11168).